Here is an 89-residue protein sequence, read N- to C-terminus: MFPKRQGIIVWLHSLKYGKQLRKFGNIHYISKRLKYAVLYCDMEQVDHVMKKLAALPFVKRVEPSYRPFLRLEFESKGEKEKDSPYPLG.

It belongs to the UPF0298 family.

The protein resides in the cytoplasm. The sequence is that of UPF0298 protein GTNG_0961 from Geobacillus thermodenitrificans (strain NG80-2).